An 881-amino-acid polypeptide reads, in one-letter code: Alanine--tRNA ligase (881 aa).

Belongs to the class-II aminoacyl-tRNA synthetase family.

The protein localises to the cytoplasm. It catalyses the reaction tRNA(Ala) + L-alanine + ATP = L-alanyl-tRNA(Ala) + AMP + diphosphate. Its function is as follows. Catalyzes the attachment of alanine to tRNA(Ala) in a two-step reaction: alanine is first activated by ATP to form Ala-AMP and then transferred to the acceptor end of tRNA(Ala). Also edits incorrectly charged Ser-tRNA(Ala) and Gly-tRNA(Ala) via its editing domain. This Lacticaseibacillus paracasei (strain ATCC 334 / BCRC 17002 / CCUG 31169 / CIP 107868 / KCTC 3260 / NRRL B-441) (Lactobacillus paracasei) protein is Alanine--tRNA ligase (alaS).